The primary structure comprises 643 residues: 1-deoxy-D-xylulose-5-phosphate synthase (643 aa).

Residues His-78 and 119–121 contribute to the thiamine diphosphate site; that span reads AHS. A Mg(2+)-binding site is contributed by Asp-150. Thiamine diphosphate is bound by residues 151-152, Asn-179, Tyr-288, and Glu-370; that span reads GA. Asn-179 lines the Mg(2+) pocket.

It belongs to the transketolase family. DXPS subfamily. As to quaternary structure, homodimer. Mg(2+) is required as a cofactor. Thiamine diphosphate serves as cofactor.

It carries out the reaction D-glyceraldehyde 3-phosphate + pyruvate + H(+) = 1-deoxy-D-xylulose 5-phosphate + CO2. It functions in the pathway metabolic intermediate biosynthesis; 1-deoxy-D-xylulose 5-phosphate biosynthesis; 1-deoxy-D-xylulose 5-phosphate from D-glyceraldehyde 3-phosphate and pyruvate: step 1/1. In terms of biological role, catalyzes the acyloin condensation reaction between C atoms 2 and 3 of pyruvate and glyceraldehyde 3-phosphate to yield 1-deoxy-D-xylulose-5-phosphate (DXP). This is 1-deoxy-D-xylulose-5-phosphate synthase from Xanthobacter autotrophicus (strain ATCC BAA-1158 / Py2).